The primary structure comprises 348 residues: UDP-3-O-acylglucosamine N-acyltransferase (348 aa).

Histidine 257 acts as the Proton acceptor in catalysis.

It belongs to the transferase hexapeptide repeat family. LpxD subfamily. As to quaternary structure, homotrimer.

It catalyses the reaction a UDP-3-O-[(3R)-3-hydroxyacyl]-alpha-D-glucosamine + a (3R)-hydroxyacyl-[ACP] = a UDP-2-N,3-O-bis[(3R)-3-hydroxyacyl]-alpha-D-glucosamine + holo-[ACP] + H(+). The protein operates within bacterial outer membrane biogenesis; LPS lipid A biosynthesis. In terms of biological role, catalyzes the N-acylation of UDP-3-O-acylglucosamine using 3-hydroxyacyl-ACP as the acyl donor. Is involved in the biosynthesis of lipid A, a phosphorylated glycolipid that anchors the lipopolysaccharide to the outer membrane of the cell. The sequence is that of UDP-3-O-acylglucosamine N-acyltransferase from Bartonella henselae (strain ATCC 49882 / DSM 28221 / CCUG 30454 / Houston 1) (Rochalimaea henselae).